The sequence spans 231 residues: Small ribosomal subunit protein uS3 (231 aa).

Residues 39-107 (IRKFLKAKLY…DVTINIKEER (69 aa)) enclose the KH type-2 domain.

It belongs to the universal ribosomal protein uS3 family. As to quaternary structure, part of the 30S ribosomal subunit. Forms a tight complex with proteins S10 and S14.

Functionally, binds the lower part of the 30S subunit head. Binds mRNA in the 70S ribosome, positioning it for translation. This chain is Small ribosomal subunit protein uS3, found in Campylobacter hominis (strain ATCC BAA-381 / DSM 21671 / CCUG 45161 / LMG 19568 / NCTC 13146 / CH001A).